Reading from the N-terminus, the 160-residue chain is Protein max (160 aa).

The span at 1–13 (MSDNDDIEVESDE) shows a compositional bias: acidic residues. A disordered region spans residues 1-40 (MSDNDDIEVESDEEQPRFQSAADKRAHHNALERKRRDHIK). S2 bears the N-acetylserine mark. S2 and S11 each carry phosphoserine. Residues 23 to 74 (DKRAHHNALERKRRDHIKDSFHSLRDSVPSLQGEKASRAQILDKATEYIQYM) form the bHLH domain. Over residues 29–40 (NALERKRRDHIK) the composition is skewed to basic and acidic residues. At K66 the chain carries N6-acetyllysine. A leucine-zipper region spans residues 81–102 (HQQDIDDLKRQNALLEQQVRAL). Residues 104–160 (KARSSAQLQTNYPSSDNSLYTNAKGGTISAFDGGSDSSSESEPEEPQSRKKLRMEAS) are disordered. S107 carries the phosphoserine modification. Polar residues predominate over residues 107–124 (SSAQLQTNYPSSDNSLYT). K153 and K154 each carry N6-acetyllysine.

Belongs to the MAX family. As to quaternary structure, efficient DNA binding requires dimerization with another bHLH protein. Binds DNA as a heterodimer with MYC or MAD. Part of the E2F6.com-1 complex in G0 phase composed of E2F6, MGA, MAX, TFDP1, CBX3, BAT8, EUHMTASE1, RING1, RNF2, MBLR, L3MBTL2 and YAF2. Component of some MLL1/MLL complex, at least composed of the core components KMT2A/MLL1, ASH2L, HCFC1/HCF1, WDR5 and RBBP5, as well as the facultative components BACC1, CHD8, E2F6, HSP70, INO80C, KANSL1, LAS1L, MAX, MCRS1, MGA, MYST1/MOF, PELP1, PHF20, PRP31, RING2, RUVB1/TIP49A, RUVB2/TIP49B, SENP3, TAF1, TAF4, TAF6, TAF7, TAF9 and TEX10. Interacts with SPAG9. The heterodimer MYC:MAX interacts with ABI1; the interaction may enhance MYC:MAX transcriptional activity. In terms of processing, phosphorylated.

The protein localises to the nucleus. It localises to the cell projection. The protein resides in the dendrite. Functionally, transcription regulator. Forms a sequence-specific DNA-binding protein complex with MYC or MAD which recognizes the core sequence 5'-CAC[GA]TG-3'. The MYC:MAX complex is a transcriptional activator, whereas the MAD:MAX complex is a repressor. CpG methylation of the recognition site greatly inhibits DNA binding, suggesting that DNA methylation may regulate the MYC:MAX complex in vivo. May repress transcription via the recruitment of a chromatin remodeling complex containing H3 'Lys-9' histone methyltransferase activity. Represses MYC transcriptional activity from E-box elements. This chain is Protein max, found in Mus musculus (Mouse).